We begin with the raw amino-acid sequence, 189 residues long: Large ribosomal subunit protein eL19A (189 aa).

A Glycyl lysine isopeptide (Lys-Gly) (interchain with G-Cter in ubiquitin) cross-link involves residue lysine 21. Phosphoserine occurs at positions 30 and 37. Residues lysine 53 and lysine 60 each participate in a glycyl lysine isopeptide (Lys-Gly) (interchain with G-Cter in ubiquitin) cross-link. Positions 58-85 (HSKSRTRAHAQSKREGRHSGYGKRKGTR) are disordered. Basic residues predominate over residues 59 to 68 (SKSRTRAHAQ). Serine 91 carries the post-translational modification Phosphoserine. Residues lysine 146 and lysine 186 each participate in a glycyl lysine isopeptide (Lys-Gly) (interchain with G-Cter in ubiquitin) cross-link. The tract at residues 164-189 (LKNRAARDRRAQRVAEKRDALLKEDA) is disordered.

The protein belongs to the eukaryotic ribosomal protein eL19 family. In terms of assembly, component of the large ribosomal subunit (LSU). Mature yeast ribosomes consist of a small (40S) and a large (60S) subunit. The 40S small subunit contains 1 molecule of ribosomal RNA (18S rRNA) and 33 different proteins (encoded by 57 genes). The large 60S subunit contains 3 rRNA molecules (25S, 5.8S and 5S rRNA) and 46 different proteins (encoded by 81 genes). eL19 lies in close proximity to the binding site for eukaryotic initiation factor eIF4G.

The protein localises to the cytoplasm. In terms of biological role, component of the ribosome, a large ribonucleoprotein complex responsible for the synthesis of proteins in the cell. The small ribosomal subunit (SSU) binds messenger RNAs (mRNAs) and translates the encoded message by selecting cognate aminoacyl-transfer RNA (tRNA) molecules. The large subunit (LSU) contains the ribosomal catalytic site termed the peptidyl transferase center (PTC), which catalyzes the formation of peptide bonds, thereby polymerizing the amino acids delivered by tRNAs into a polypeptide chain. The nascent polypeptides leave the ribosome through a tunnel in the LSU and interact with protein factors that function in enzymatic processing, targeting, and the membrane insertion of nascent chains at the exit of the ribosomal tunnel. eL19 may play a role in the last stages of translation initiation, in particular subunit joining and shedding/releasing factors. This is Large ribosomal subunit protein eL19A from Saccharomyces cerevisiae (strain ATCC 204508 / S288c) (Baker's yeast).